We begin with the raw amino-acid sequence, 592 residues long: A-type ATP synthase subunit A (592 aa).

Residue 234–241 coordinates ATP; that stretch reads GPFGSGKT.

This sequence belongs to the ATPase alpha/beta chains family. In terms of assembly, has multiple subunits with at least A(3), B(3), C, D, E, F, H, I and proteolipid K(x).

It is found in the cell membrane. It catalyses the reaction ATP + H2O + 4 H(+)(in) = ADP + phosphate + 5 H(+)(out). Functionally, produces ATP from ADP in the presence of a proton gradient across the membrane. The archaeal alpha chain is a catalytic subunit. Its function is as follows. Component of the A-type ATP synthase that produces ATP from ADP in the presence of a proton gradient across the membrane. The A chain is the catalytic subunit. The protein is A-type ATP synthase subunit A of Sulfolobus acidocaldarius (strain ATCC 33909 / DSM 639 / JCM 8929 / NBRC 15157 / NCIMB 11770).